The chain runs to 393 residues: Formate-dependent phosphoribosylglycinamide formyltransferase (393 aa).

N(1)-(5-phospho-beta-D-ribosyl)glycinamide contacts are provided by residues 22-23 and Glu-82; that span reads EL. ATP-binding positions include Arg-114, Lys-155, 160–165, 195–198, and Glu-203; these read SSGKGQ and EGFI. Positions 119–308 constitute an ATP-grasp domain; that stretch reads RLAAEELKLP…QFALHARAIL (190 aa). Residues Glu-267 and Glu-279 each coordinate Mg(2+). N(1)-(5-phospho-beta-D-ribosyl)glycinamide contacts are provided by residues Asp-286, Lys-356, and 363 to 364; that span reads RR.

This sequence belongs to the PurK/PurT family. In terms of assembly, homodimer.

It carries out the reaction N(1)-(5-phospho-beta-D-ribosyl)glycinamide + formate + ATP = N(2)-formyl-N(1)-(5-phospho-beta-D-ribosyl)glycinamide + ADP + phosphate + H(+). It functions in the pathway purine metabolism; IMP biosynthesis via de novo pathway; N(2)-formyl-N(1)-(5-phospho-D-ribosyl)glycinamide from N(1)-(5-phospho-D-ribosyl)glycinamide (formate route): step 1/1. Functionally, involved in the de novo purine biosynthesis. Catalyzes the transfer of formate to 5-phospho-ribosyl-glycinamide (GAR), producing 5-phospho-ribosyl-N-formylglycinamide (FGAR). Formate is provided by PurU via hydrolysis of 10-formyl-tetrahydrofolate. The chain is Formate-dependent phosphoribosylglycinamide formyltransferase from Pseudomonas syringae pv. tomato (strain ATCC BAA-871 / DC3000).